The chain runs to 898 residues: MSDDKKDEEKLKKSDENFDDDSKYYEFDDTIKKVFEEEKAKEEDEDEEEIPQEKEGYQVKSQLLETEQNGLQPADLAKVMKSSFIEYAMSVIVSRALPDARDGLKPVHRRILYGMSELGMFHTAPHKKSARIVGDVLGKYHPHGDSSVYEAMVRMAQDFSLRYPLIDGHGNFGSIDGDEAAAMRYTEARMSKIAGVMVDGIKKNTVDFIDNYDGTEKEPTVLPSRFPNLLVSGTSGIAVGMATNIPPHNLGEIIDAVCALAKNPEITIDGLMEFVLAPDFPTGATIFNKAGLIEAYKTGRGSITMRAKANIQELANGKSKIIITEIPYEVKKTEIMEKIADHLKNKRIEGISDFRDESNRDGIRVVIDVKKNAVPEVILNTLYKLTRLQTNFSFNMIALVNGEPKLLNLKECLQVYLDHQIDVTRRRLQFDLEKDLARAHILEGLKICVENIDRVIEIIKKSKTDVDAQAKLCQTFSLSEIQAKAIVDMRLGRLTGLAIEKMNDELDQVNARIAEYRAILSSHEKLIELIIKELQEVKEAYGDKRRSEIRWDVMSSINNEDLIPQKEIVITLSSNNYIKRIDLEEYREQRRGGVGVSTVKTYQDDDIQDVVVANTHADLLIFTDEAKIYRVRGHEIPSGTKQSKGTPIVNIVPTIQKNEKVVKIICVTDYEESQSLITVTERGVIKKTNLKEYELIRKNGKYALSLLEDDHLIDVRVVDQDEEIFIAASNSRINRFNVADVREMGRVARGVGGIRLSDDDKVVSVSSSKDGAYIFSLGAKGYGKLSLVESYRKTKRNAKGVITLNEDKAGKLVYAAAVHGVEDLIIMTQSGIAIRISLRDINVIGRNAKGVKIINLKGRSDQIVGVAKIYDEDATDRELTKEEYIEVTKEIDIDLANE.

Disordered regions lie at residues 1-22 (MSDD…DDDS) and 36-56 (EEEK…EKEG). A Topo IIA-type catalytic domain is found at 97 to 562 (LPDARDGLKP…VMSSINNEDL (466 aa)). Residue Tyr-185 is the O-(5'-phospho-DNA)-tyrosine intermediate of the active site. A GyrA-box motif is present at residues 589 to 595 (QRRGGVG).

The protein belongs to the type II topoisomerase GyrA/ParC subunit family. In terms of assembly, heterotetramer, composed of two GyrA and two GyrB chains. In the heterotetramer, GyrA contains the active site tyrosine that forms a transient covalent intermediate with DNA, while GyrB binds cofactors and catalyzes ATP hydrolysis.

The protein resides in the cytoplasm. It catalyses the reaction ATP-dependent breakage, passage and rejoining of double-stranded DNA.. Functionally, a type II topoisomerase that negatively supercoils closed circular double-stranded (ds) DNA in an ATP-dependent manner to modulate DNA topology and maintain chromosomes in an underwound state. Negative supercoiling favors strand separation, and DNA replication, transcription, recombination and repair, all of which involve strand separation. Also able to catalyze the interconversion of other topological isomers of dsDNA rings, including catenanes and knotted rings. Type II topoisomerases break and join 2 DNA strands simultaneously in an ATP-dependent manner. This chain is DNA gyrase subunit A, found in Metamycoplasma arthritidis (strain 158L3-1) (Mycoplasma arthritidis).